The chain runs to 405 residues: 11-beta-hydroxysteroid dehydrogenase type 2 (405 aa).

An NAD(+)-binding site is contributed by 82–111; it reads TRAVLITGCDSGFGKETAKKLDSMGFTVLA. Residue Ser219 coordinates substrate. Catalysis depends on Tyr232, which acts as the Proton acceptor. Residues 335–339 form an essential for protein stability region; sequence RRRYY. Low complexity predominate over residues 377–387; sequence QPGQPGTTPPQ. Residues 377–405 form a disordered region; it reads QPGQPGTTPPQDAAQDPNLSPGPSPAVAR. The segment covering 396-405 has biased composition (pro residues); it reads SPGPSPAVAR.

Belongs to the short-chain dehydrogenases/reductases (SDR) family. In terms of assembly, interacts with ligand-free cytoplasmic NR3C2. In terms of tissue distribution, expressed in kidney, placenta, pancreas, prostate, ovary, small intestine and colon, and in lower levels in the spleen and testis. At midgestation, expressed at high levels in placenta and in fetal kidney and, at much lower levels, in fetal lung and testis.

It localises to the microsome. The protein resides in the endoplasmic reticulum. The catalysed reaction is an 11beta-hydroxysteroid + NAD(+) = an 11-oxosteroid + NADH + H(+). The enzyme catalyses cortisol + NAD(+) = cortisone + NADH + H(+). It carries out the reaction corticosterone + NAD(+) = 11-dehydrocorticosterone + NADH + H(+). It catalyses the reaction 11beta,17beta-dihydroxyandrost-4-ene-3-one + NAD(+) = 17beta-hydroxyandrost-4-ene-3,11-dione + NADH + H(+). The catalysed reaction is 11beta-hydroxyandrost-4-ene-3,17-dione + NAD(+) = androst-4-ene-3,11,17-trione + NADH + H(+). It participates in steroid metabolism. Inhibited by glycyrrhetinic acid (derived from liquorice). Its function is as follows. Catalyzes the conversion of biologically active 11beta-hydroxyglucocorticoids (11beta-hydroxysteroid) such as cortisol, to inactive 11-ketoglucocorticoids (11-oxosteroid) such as cortisone, in the presence of NAD(+). Functions as a dehydrogenase (oxidase), thereby decreasing the concentration of active glucocorticoids, thus protecting the nonselective mineralocorticoid receptor from occupation by glucocorticoids. Plays an important role in maintaining glucocorticoids balance during preimplantation and protects the fetus from excessive maternal corticosterone exposure. Catalyzes the oxidation of 11beta-hydroxytestosterone (11beta,17beta-dihydroxyandrost-4-ene-3-one) to 11-ketotestosterone (17beta-hydroxyandrost-4-ene-3,11-dione), a major bioactive androgen. Catalyzes the conversion of 11beta-hydroxyandrostenedione (11beta-hydroxyandrost-4-ene-3,17-dione) to 11-ketoandrostenedione (androst-4-ene-3,11,17-trione), which can be further metabolized to 11-ketotestosterone. Converts 7-beta-25-dihydroxycholesterol to 7-oxo-25-hydroxycholesterol in vitro. 7-beta-25-dihydroxycholesterol (not 7-oxo-25-hydroxycholesterol) acts as a ligand for the G-protein-coupled receptor (GPCR) Epstein-Barr virus-induced gene 2 (EBI2) and may thereby regulate immune cell migration. May protect ovulating oocytes and fertilizing spermatozoa from the adverse effects of cortisol. The chain is 11-beta-hydroxysteroid dehydrogenase type 2 from Homo sapiens (Human).